The primary structure comprises 72 residues: MSRLLQFCSSLLRHRVVLFSKPGHSGRLSHSESPQNQVLTPTESVVGIVVFFATFFIPAAYVMSNLKFFKGE.

The N-terminal 29 residues, 1 to 29, are a transit peptide targeting the mitochondrion; that stretch reads MSRLLQFCSSLLRHRVVLFSKPGHSGRLS. Residues 30 to 40 lie on the Mitochondrial matrix side of the membrane; the sequence is HSESPQNQVLT. Residues 41 to 64 traverse the membrane as a helical segment; that stretch reads PTESVVGIVVFFATFFIPAAYVMS. At 65 to 72 the chain is on the mitochondrial intermembrane side; the sequence is NLKFFKGE.

Belongs to the cytochrome c oxidase VIII family. As to quaternary structure, component of the cytochrome c oxidase (complex IV, CIV), a multisubunit enzyme composed of 14 subunits. The complex is composed of a catalytic core of 3 subunits MT-CO1, MT-CO2 and MT-CO3, encoded in the mitochondrial DNA, and 11 supernumerary subunits COX4I, COX5A, COX5B, COX6A, COX6B, COX6C, COX7A, COX7B, COX7C, COX8 and NDUFA4, which are encoded in the nuclear genome. The complex exists as a monomer or a dimer and forms supercomplexes (SCs) in the inner mitochondrial membrane with NADH-ubiquinone oxidoreductase (complex I, CI) and ubiquinol-cytochrome c oxidoreductase (cytochrome b-c1 complex, complex III, CIII), resulting in different assemblies (supercomplex SCI(1)III(2)IV(1) and megacomplex MCI(2)III(2)IV(2)).

The protein resides in the mitochondrion inner membrane. It functions in the pathway energy metabolism; oxidative phosphorylation. Component of the cytochrome c oxidase, the last enzyme in the mitochondrial electron transport chain which drives oxidative phosphorylation. The respiratory chain contains 3 multisubunit complexes succinate dehydrogenase (complex II, CII), ubiquinol-cytochrome c oxidoreductase (cytochrome b-c1 complex, complex III, CIII) and cytochrome c oxidase (complex IV, CIV), that cooperate to transfer electrons derived from NADH and succinate to molecular oxygen, creating an electrochemical gradient over the inner membrane that drives transmembrane transport and the ATP synthase. Cytochrome c oxidase is the component of the respiratory chain that catalyzes the reduction of oxygen to water. Electrons originating from reduced cytochrome c in the intermembrane space (IMS) are transferred via the dinuclear copper A center (CU(A)) of subunit 2 and heme A of subunit 1 to the active site in subunit 1, a binuclear center (BNC) formed by heme A3 and copper B (CU(B)). The BNC reduces molecular oxygen to 2 water molecules using 4 electrons from cytochrome c in the IMS and 4 protons from the mitochondrial matrix. This chain is Cytochrome c oxidase subunit 8C, mitochondrial (Cox8c), found in Rattus norvegicus (Rat).